The sequence spans 66 residues: Sec-independent protein translocase protein TatA (66 aa).

A helical transmembrane segment spans residues 1 to 21 (MSIGIWQIAIVVILVVLLFGR). The segment at 43–66 (ATDITDEPEPKNVSENNQDSKDKE) is disordered. Residues 50–66 (PEPKNVSENNQDSKDKE) are compositionally biased toward basic and acidic residues.

Belongs to the TatA/E family. In terms of assembly, the Tat system comprises two distinct complexes: a TatABC complex, containing multiple copies of TatA, TatB and TatC subunits, and a separate TatA complex, containing only TatA subunits. Substrates initially bind to the TatABC complex, which probably triggers association of the separate TatA complex to form the active translocon.

Its subcellular location is the cell inner membrane. In terms of biological role, part of the twin-arginine translocation (Tat) system that transports large folded proteins containing a characteristic twin-arginine motif in their signal peptide across membranes. TatA could form the protein-conducting channel of the Tat system. The chain is Sec-independent protein translocase protein TatA from Pelagibacter ubique (strain HTCC1062).